A 50-amino-acid polypeptide reads, in one-letter code: Sperm protamine P1 (50 aa).

The protein belongs to the protamine P1 family. As to expression, testis.

It is found in the nucleus. The protein resides in the chromosome. In terms of biological role, protamines substitute for histones in the chromatin of sperm during the haploid phase of spermatogenesis. They compact sperm DNA into a highly condensed, stable and inactive complex. This chain is Sperm protamine P1 (PRM1), found in Trachypithecus vetulus (Purple-faced langur).